We begin with the raw amino-acid sequence, 119 residues long: uncharacterized protein (119 aa).

2 helical membrane-spanning segments follow: residues 57 to 77 (FSHH…SILF) and 80 to 100 (YIFV…FILH).

It localises to the membrane. This is an uncharacterized protein from Saccharomyces cerevisiae (strain ATCC 204508 / S288c) (Baker's yeast).